The primary structure comprises 171 residues: S-ribosylhomocysteine lyase (171 aa).

His54, His58, and Cys128 together coordinate Fe cation.

This sequence belongs to the LuxS family. As to quaternary structure, homodimer. Fe cation serves as cofactor.

The enzyme catalyses S-(5-deoxy-D-ribos-5-yl)-L-homocysteine = (S)-4,5-dihydroxypentane-2,3-dione + L-homocysteine. Involved in the synthesis of autoinducer 2 (AI-2) which is secreted by bacteria and is used to communicate both the cell density and the metabolic potential of the environment. The regulation of gene expression in response to changes in cell density is called quorum sensing. Catalyzes the transformation of S-ribosylhomocysteine (RHC) to homocysteine (HC) and 4,5-dihydroxy-2,3-pentadione (DPD). This is S-ribosylhomocysteine lyase from Proteus mirabilis (strain HI4320).